Consider the following 945-residue polypeptide: Isoleucine--tRNA ligase (945 aa).

Residues 66 to 76 (PYANGDIHLGH) carry the 'HIGH' region motif. Glu581 serves as a coordination point for L-isoleucyl-5'-AMP. A 'KMSKS' region motif is present at residues 622–626 (KMSKS). Lys625 serves as a coordination point for ATP. Zn(2+) is bound by residues Cys908, Cys911, Cys928, and Cys931.

It belongs to the class-I aminoacyl-tRNA synthetase family. IleS type 1 subfamily. As to quaternary structure, monomer. It depends on Zn(2+) as a cofactor.

The protein localises to the cytoplasm. It carries out the reaction tRNA(Ile) + L-isoleucine + ATP = L-isoleucyl-tRNA(Ile) + AMP + diphosphate. Its function is as follows. Catalyzes the attachment of isoleucine to tRNA(Ile). As IleRS can inadvertently accommodate and process structurally similar amino acids such as valine, to avoid such errors it has two additional distinct tRNA(Ile)-dependent editing activities. One activity is designated as 'pretransfer' editing and involves the hydrolysis of activated Val-AMP. The other activity is designated 'posttransfer' editing and involves deacylation of mischarged Val-tRNA(Ile). The chain is Isoleucine--tRNA ligase from Burkholderia orbicola (strain MC0-3).